The primary structure comprises 338 residues: Nucleoid-associated protein PM1885 (338 aa).

It belongs to the YejK family.

The protein localises to the cytoplasm. Its subcellular location is the nucleoid. The polypeptide is Nucleoid-associated protein PM1885 (Pasteurella multocida (strain Pm70)).